The primary structure comprises 667 residues: Acyl-coenzyme A oxidase acox-3 (667 aa).

FAD is bound by residues 138–141, 146–147, G178, R313, 334–337, and G410; these read FCLT, GS, and QQYR. E433 acts as the Proton acceptor in catalysis. Residue E435 coordinates FAD. The Microbody targeting signal signature appears at 665–667; it reads SKL.

This sequence belongs to the acyl-CoA oxidase family. Homodimer. The cofactor is FAD. Expressed in intestine.

The protein resides in the peroxisome. It carries out the reaction IC-asc-C7-CoA + O2 = IC-asc-DeltaC7-CoA + H2O2. The catalysed reaction is IC-asc-C9-CoA + O2 = IC-asc-DeltaC9-CoA + H2O2. It catalyses the reaction asc-C13-CoA + O2 = asc-DeltaC13-CoA + H2O2. The protein operates within lipid metabolism; peroxisomal fatty acid beta-oxidation. With respect to regulation, in contrast to other acyl-coenzyme A oxidases which bind to and are activated by ATP, does not bind ATP. Functionally, involved in the first step of peroxisomal beta-oxidation by catalyzing the desaturation of fatty acid-derived side chains of ascaroside pheromones, which regulates development and behavior. Specifically, shortens indol-3-carbonyl(IC)-ascarosides with 7-carbon (IC-asc-C7) or 9-carbon (IC-asc-C9) side chains and contributes to the shortening of ascarosides with 13-carbon (asc-C13) and 15-carbon (asc-C15) side chains. The polypeptide is Acyl-coenzyme A oxidase acox-3 (Caenorhabditis elegans).